The sequence spans 66 residues: Small ribosomal subunit protein eS27 (66 aa).

4 residues coordinate Zn(2+): Cys-21, Cys-24, Cys-40, and Cys-43. The C4-type zinc finger occupies 21–43; sequence CRQCNNEQVIFSNATFPVRCLSC.

This sequence belongs to the eukaryotic ribosomal protein eS27 family. In terms of assembly, part of the 30S ribosomal subunit. It depends on Zn(2+) as a cofactor.

The chain is Small ribosomal subunit protein eS27 from Sulfolobus acidocaldarius (strain ATCC 33909 / DSM 639 / JCM 8929 / NBRC 15157 / NCIMB 11770).